Reading from the N-terminus, the 138-residue chain is Acidic phospholipase A2 CoaPLA2 (138 aa).

The N-terminal stretch at 1–16 (MRTLWIVAVLLLGVEG) is a signal peptide. Disulfide bonds link Cys-42-Cys-131, Cys-44-Cys-60, Cys-59-Cys-111, Cys-65-Cys-138, Cys-66-Cys-104, Cys-73-Cys-97, and Cys-91-Cys-102. Tyr-43, Gly-45, and Gly-47 together coordinate Ca(2+). Residue His-63 is part of the active site. Position 64 (Asp-64) interacts with Ca(2+). Asp-105 is a catalytic residue.

It belongs to the phospholipase A2 family. Group II subfamily. D49 sub-subfamily. Homodimer. Ca(2+) serves as cofactor. In terms of tissue distribution, expressed by the venom gland.

The protein resides in the secreted. The enzyme catalyses a 1,2-diacyl-sn-glycero-3-phosphocholine + H2O = a 1-acyl-sn-glycero-3-phosphocholine + a fatty acid + H(+). Snake venom phospholipase A2 (PLA2) that shows very low inhibition of ADP-induced platelet aggregation in platelet-rich plasma of human, rabbit and guinea pig. Shows edema-inducing activity and myotoxicity. PLA2 catalyzes the calcium-dependent hydrolysis of the 2-acyl groups in 3-sn-phosphoglycerides. This chain is Acidic phospholipase A2 CoaPLA2, found in Crotalus lutosus abyssus (Grand Canyon rattlesnake).